Consider the following 809-residue polypeptide: 3',5'-cyclic-AMP phosphodiesterase 4D (809 aa).

Positions 1 to 107 (MEAEGSSAPA…SGATGRVRHR (107 aa)) are disordered. Phosphoserine is present on residues His-54, Pro-59, and Pro-63. Over residues 58-89 (PPPPPPSPQPQPQCPLQPPPPPPLPPPPPPPG) the composition is skewed to pro residues. A compositionally biased stretch (low complexity) spans 90 to 102 (AARGRYASSGATG). A phosphoserine mark is found at Ser-142, Ser-299, Ser-301, Ser-348, and Ser-375. Residues 343–364 (EVEIPSPTQKEKEKKKRPMSQI) form a disordered region. One can recognise a PDEase domain in the interval 386-715 (VKTEQEDVLA…EWYQSTIPQS (330 aa)). Residue Lys-387 forms a Glycyl lysine isopeptide (Lys-Gly) (interchain with G-Cter in SUMO) linkage. His-462 (proton donor) is an active-site residue. His-462 contributes to the 3',5'-cyclic AMP binding site. His-462 contributes to the AMP binding site. Residues His-466, His-502, Asp-503, and Asp-620 each contribute to the Zn(2+) site. Positions 503, 620, 623, 671, and 674 each coordinate AMP. Residue Asp-503 coordinates Mg(2+). Asp-503 is a binding site for Mn(2+). Gln-671 and Phe-674 together coordinate 3',5'-cyclic AMP. Disordered regions lie at residues 710 to 729 (STIPQSPSPAPDDPEEGRQG) and 739 to 809 (TLEE…SPDT). The segment covering 762–773 (CSDSKTLCTQDS) has biased composition (polar residues). Positions 779–796 (PLDEQVEEEAVGEEEESQ) are enriched in acidic residues.

The protein belongs to the cyclic nucleotide phosphodiesterase family. PDE4 subfamily. Homodimer for the long isoforms. Isoforms with truncated N-termini are monomeric. Isoform 3 is part of a ternary complex containing PRKAR2A, PRKAR2B and AKAP9. Interacts with PDE4DIP. Identified in a complex composed of RYR1, PDE4D, PKA, FKBP1A and protein phosphatase 1 (PP1). Isoform 5, isoform N3 and isoform 12 bind RACK1 via their unique N-terminus. Binds ARRB2. Interacts (via N-terminal region) with SHANK2 (via proline-rich region); the interaction is increased in a PKA-dependent manner. It depends on Zn(2+) as a cofactor. Mg(2+) serves as cofactor. Requires Mn(2+) as cofactor. Long isoforms that share a conserved PKA phosphorylation site in the N-terminus are activated by PKA through phosphorylation. Isoform 3 and isoform 7 are activated by phosphorylation (in vitro), but not isoform 6. Isoform N3 and isoform 12 are phosphorylated on Ser-49, Ser-51, Ser-55 and Ser-59. Post-translationally, sumoylation of long isoforms by PIAS4 augments their activation by PKA phosphorylation and represses their inhibition by ERK phosphorylation. Expressed in colonic epithelial cells (at protein level). Widespread; most abundant in skeletal muscle. In terms of tissue distribution, detected in brain. As to expression, detected in brain, placenta, lung and kidney. Detected in heart and skeletal muscle.

The protein localises to the apical cell membrane. It localises to the cytoplasm. It is found in the membrane. The protein resides in the cytoskeleton. Its subcellular location is the microtubule organizing center. The protein localises to the centrosome. It catalyses the reaction 3',5'-cyclic AMP + H2O = AMP + H(+). It functions in the pathway purine metabolism; 3',5'-cyclic AMP degradation; AMP from 3',5'-cyclic AMP: step 1/1. With respect to regulation, inhibited by rolipram. Activated by phosphatidic acid. Functionally, hydrolyzes the second messenger cAMP, which is a key regulator of many important physiological processes. This chain is 3',5'-cyclic-AMP phosphodiesterase 4D, found in Homo sapiens (Human).